The chain runs to 148 residues: uncharacterized protein (148 aa).

The protein belongs to the SufE family.

This is an uncharacterized protein from Rhizobium etli (strain ATCC 51251 / DSM 11541 / JCM 21823 / NBRC 15573 / CFN 42).